Here is a 340-residue protein sequence, read N- to C-terminus: Phosphate acyltransferase (340 aa).

This sequence belongs to the PlsX family. In terms of assembly, homodimer. Probably interacts with PlsY.

Its subcellular location is the cytoplasm. The catalysed reaction is a fatty acyl-[ACP] + phosphate = an acyl phosphate + holo-[ACP]. Its pathway is lipid metabolism; phospholipid metabolism. Functionally, catalyzes the reversible formation of acyl-phosphate (acyl-PO(4)) from acyl-[acyl-carrier-protein] (acyl-ACP). This enzyme utilizes acyl-ACP as fatty acyl donor, but not acyl-CoA. This Nostoc punctiforme (strain ATCC 29133 / PCC 73102) protein is Phosphate acyltransferase.